The following is a 51-amino-acid chain: Large ribosomal subunit protein eL39 (51 aa).

The protein belongs to the eukaryotic ribosomal protein eL39 family.

In Picrophilus torridus (strain ATCC 700027 / DSM 9790 / JCM 10055 / NBRC 100828 / KAW 2/3), this protein is Large ribosomal subunit protein eL39.